Consider the following 365-residue polypeptide: Peptide chain release factor 2 (365 aa).

Gln252 is subject to N5-methylglutamine.

Belongs to the prokaryotic/mitochondrial release factor family. Post-translationally, methylated by PrmC. Methylation increases the termination efficiency of RF2.

It localises to the cytoplasm. Peptide chain release factor 2 directs the termination of translation in response to the peptide chain termination codons UGA and UAA. In Haemophilus ducreyi (strain 35000HP / ATCC 700724), this protein is Peptide chain release factor 2.